Here is a 376-residue protein sequence, read N- to C-terminus: Rhodopsin (376 aa).

Residues 1-51 (MSLINEPSYSAYSWGGQGGYGNQTVVDKVLPEMLHLIDPHWYQFPPMNPLW) lie on the Extracellular side of the membrane. Residue N22 is glycosylated (N-linked (GlcNAc...) asparagine). The helical transmembrane segment at 52–76 (HGLLGFVIGCLGFVSVVGNGMVIYI) threads the bilayer. Residues 77-88 (FSTTKGLRTPSN) lie on the Cytoplasmic side of the membrane. A helical membrane pass occupies residues 89–113 (LLVVNLAFSDFLMMLSMSPPMVINC). Over 114–128 (YYETWVLGPFMCELY) the chain is Extracellular. A disulfide bridge links C125 with C202. Residues 129 to 148 (ALLGSLFGCGSIWTMVMIAL) traverse the membrane as a helical segment. Topologically, residues 149-167 (DRYNVIVKGLAAKPMTNKT) are cytoplasmic. Residues 168–191 (AMLRILGIWAMSIAWTVFPLFGWN) form a helical membrane-spanning segment. The Extracellular portion of the chain corresponds to 192-215 (RYVPEGNMTACGTDYLNKEWVSRS). N-linked (GlcNAc...) asparagine glycosylation is present at N198. The helical transmembrane segment at 216-243 (YILVYSVFVYFLPLATIIYSYWFIVQAV) threads the bilayer. The Cytoplasmic portion of the chain corresponds to 244–278 (SAHEKQMREQAKKMNVASLRSAENANTSAECKLAK). Residues 279 to 302 (VALMTISLWFFAWTPYLVTDFSGI) form a helical membrane-spanning segment. Residues 303 to 309 (FEWGKIS) are Extracellular-facing. The chain crosses the membrane as a helical span at residues 310-334 (PLATIWCSLFAKANAVYNPIVYGIS). K321 carries the post-translational modification N6-(retinylidene)lysine. Over 335–376 (HPKYRAALNKKFPSLACASEPDDTASQASGATTVSDEKSASA) the chain is Cytoplasmic. Residues 353 to 376 (SEPDDTASQASGATTVSDEKSASA) form a disordered region. The span at 358-368 (TASQASGATTV) shows a compositional bias: polar residues.

It belongs to the G-protein coupled receptor 1 family. Opsin subfamily. Phosphorylated on some or all of the serine and threonine residues present in the C-terminal region.

It is found in the membrane. Its function is as follows. Visual pigments are the light-absorbing molecules that mediate vision. They consist of an apoprotein, opsin, covalently linked to cis-retinal. The polypeptide is Rhodopsin (Sphodromantis sp. (Mantis)).